Reading from the N-terminus, the 350-residue chain is MTDQAFVTLTTNDAYAKGALVLGSSLKQHRTTRRLVVLATPQVSDSMRKVLETVFDEVIMVDVLDSGDSAHLTLMKRPELGVTLTKLHCWSLTQYSKCVFMDADTLVLANIDDLFDREELSAAPDPGWPDCFNSGVFVYQPSVETYNQLLHLASEQGSFDGGDQGILNTFFSSWATTDIRKHLPFIYNLSSISIYSYLPAFKVFGASAKVVHFLGRVKPWNYTYDPKTKSVKSEAHDPNMTHPEFLILWWNIFTTNVLPLLQQFGLVKDTCSYVNVLSDLVYTLAFSCGFCRKEDVSGAISHLSLGEIPAMAQPFVSSEERKERWEQGQADYMGADSFDNIKRKLDTYLQ.

T2 bears the N-acetylthreonine mark. UDP contacts are provided by L9, T11, N12, and Y15. Positions 9, 11, 12, and 15 each coordinate UDP-alpha-D-glucose. Position 44 is a phosphoserine (S44). R77 is a binding site for UDP. UDP-alpha-D-glucose contacts are provided by R77, K86, D102, A103, D104, N133, S134, D160, D163, and Q164. Positions 102, 103, and 104 each coordinate UDP. Residue D102 participates in Mn(2+) binding. D104 is a binding site for Mn(2+). Y195 carries an O-linked (Glc...) tyrosine glycan. Residues H212, G215, and K218 each coordinate UDP. Residue H212 participates in Mn(2+) binding. Residues G215 and K218 each contribute to the UDP-alpha-D-glucose site. Residues 301-333 (SHLSLGEIPAMAQPFVSSEERKERWEQGQADYM) are interaction with GYS1.

The protein belongs to the glycosyltransferase 8 family. Glycogenin subfamily. In terms of assembly, part of the GYS1-GYG1 complex, a heterooctamer composed of a tetramer of GYS1 and 2 dimers of GYG1, where each GYS1 protomer binds to one GYG1 subunit (via GYG1 C-terminus); the GYS1 tetramer may dissociate from GYG1 dimers to continue glycogen polymerization on its own. May also form a heterooctamer complex with GYS2 (via GYG1 C-terminus). It depends on Mn(2+) as a cofactor. Post-translationally, self-glycosylated by the transfer of glucose residues from UDP-glucose to itself, forming an alpha-1,4-glycan of around 10 residues attached to Tyr-195. Phosphorylated. In terms of tissue distribution, highly expressed in skeletal muscle and heart, with lower levels in brain, lung, kidney and pancreas.

It localises to the cytoplasm. Its subcellular location is the nucleus. The enzyme catalyses L-tyrosyl-[glycogenin] + UDP-alpha-D-glucose = alpha-D-glucosyl-L-tyrosyl-[glycogenin] + UDP + H(+). The catalysed reaction is [1,4-alpha-D-glucosyl](n)-L-tyrosyl-[glycogenin] + UDP-alpha-D-glucose = [1,4-alpha-D-glucosyl](n+1)-L-tyrosyl-[glycogenin] + UDP + H(+). It functions in the pathway glycan biosynthesis; glycogen biosynthesis. Its activity is regulated as follows. Inhibited by palladium ions. Functionally, glycogenin participates in the glycogen biosynthetic process along with glycogen synthase and glycogen branching enzyme. It catalyzes the formation of a short alpha (1,4)-glucosyl chain covalently attached via a glucose 1-O-tyrosyl linkage to internal tyrosine residues and these chains act as primers for the elongation reaction catalyzed by glycogen synthase. This Homo sapiens (Human) protein is Glycogenin-1.